The following is a 300-amino-acid chain: tRNA pseudouridine synthase B (300 aa).

The Nucleophile role is filled by D47.

It belongs to the pseudouridine synthase TruB family. Type 1 subfamily.

It catalyses the reaction uridine(55) in tRNA = pseudouridine(55) in tRNA. In terms of biological role, responsible for synthesis of pseudouridine from uracil-55 in the psi GC loop of transfer RNAs. This chain is tRNA pseudouridine synthase B, found in Azoarcus sp. (strain BH72).